Reading from the N-terminus, the 278-residue chain is Pantothenate synthetase (278 aa).

27–34 is an ATP binding site; it reads MGYLHEGH. The Proton donor role is filled by histidine 34. Glutamine 58 serves as a coordination point for (R)-pantoate. Glutamine 58 serves as a coordination point for beta-alanine. 144-147 is a binding site for ATP; it reads GQKD. Residue glutamine 150 coordinates (R)-pantoate. Residues valine 173 and 181–184 each bind ATP; that span reads MSSR.

It belongs to the pantothenate synthetase family. In terms of assembly, homodimer.

Its subcellular location is the cytoplasm. It carries out the reaction (R)-pantoate + beta-alanine + ATP = (R)-pantothenate + AMP + diphosphate + H(+). It functions in the pathway cofactor biosynthesis; (R)-pantothenate biosynthesis; (R)-pantothenate from (R)-pantoate and beta-alanine: step 1/1. Catalyzes the condensation of pantoate with beta-alanine in an ATP-dependent reaction via a pantoyl-adenylate intermediate. The polypeptide is Pantothenate synthetase (Roseiflexus sp. (strain RS-1)).